A 368-amino-acid polypeptide reads, in one-letter code: Quinolinate synthase (368 aa).

Histidine 46 and serine 63 together coordinate iminosuccinate. Cysteine 110 serves as a coordination point for [4Fe-4S] cluster. Residues 141–143 and serine 162 contribute to the iminosuccinate site; that span reads YVN. Cysteine 230 provides a ligand contact to [4Fe-4S] cluster. Residues 256 to 258 and threonine 273 each bind iminosuccinate; that span reads HPE. Position 320 (cysteine 320) interacts with [4Fe-4S] cluster.

The protein belongs to the quinolinate synthase family. Type 3 subfamily. [4Fe-4S] cluster serves as cofactor.

The protein resides in the cytoplasm. The enzyme catalyses iminosuccinate + dihydroxyacetone phosphate = quinolinate + phosphate + 2 H2O + H(+). It functions in the pathway cofactor biosynthesis; NAD(+) biosynthesis; quinolinate from iminoaspartate: step 1/1. Catalyzes the condensation of iminoaspartate with dihydroxyacetone phosphate to form quinolinate. The polypeptide is Quinolinate synthase (Bacillus cereus (strain ATCC 14579 / DSM 31 / CCUG 7414 / JCM 2152 / NBRC 15305 / NCIMB 9373 / NCTC 2599 / NRRL B-3711)).